The primary structure comprises 161 residues: Cell wall protein YLR042C (161 aa).

The N-terminal stretch at 1–24 is a signal peptide; sequence MKISQFGSLAFAPIVLLQLFIVQA. Residues asparagine 77, asparagine 104, and asparagine 120 are each glycosylated (N-linked (GlcNAc...) asparagine). Residues 111–139 form a disordered region; it reads FTPLPSSSRNETKSSQTTNTISSSTSTGG. The span at 123-137 shows a compositional bias: low complexity; that stretch reads KSSQTTNTISSSTST. Residue glycine 139 is the site of GPI-anchor amidated glycine attachment. Residues 140–161 constitute a propeptide, removed in mature form; it reads VGSVKPCLYFVLMLETIAYLFS.

The GPI-anchor is attached to the protein in the endoplasmic reticulum and serves to target the protein to the cell surface. There, the glucosamine-inositol phospholipid moiety is cleaved off and the GPI-modified mannoprotein is covalently attached via its lipidless GPI glycan remnant to the 1,6-beta-glucan of the outer cell wall layer.

Its subcellular location is the secreted. It is found in the cell wall. The protein localises to the membrane. This is Cell wall protein YLR042C from Saccharomyces cerevisiae (strain ATCC 204508 / S288c) (Baker's yeast).